Here is a 297-residue protein sequence, read N- to C-terminus: Phosphatidylglycerol--prolipoprotein diacylglyceryl transferase (297 aa).

A run of 4 helical transmembrane segments spans residues 20 to 40, 57 to 77, 105 to 125, and 133 to 153; these read FITI…GLFV, EILP…YVIF, AVWE…ISII, and INLK…QSIG. A 1,2-diacyl-sn-glycero-3-phospho-(1'-sn-glycerol) is bound at residue arginine 154. 3 helical membrane passes run 193–213, 225–245, and 266–286; these read PTFL…IIIF, GFIS…IEGL, and AQFI…FLRL.

The protein belongs to the Lgt family.

Its subcellular location is the cell inner membrane. The catalysed reaction is L-cysteinyl-[prolipoprotein] + a 1,2-diacyl-sn-glycero-3-phospho-(1'-sn-glycerol) = an S-1,2-diacyl-sn-glyceryl-L-cysteinyl-[prolipoprotein] + sn-glycerol 1-phosphate + H(+). The protein operates within protein modification; lipoprotein biosynthesis (diacylglyceryl transfer). In terms of biological role, catalyzes the transfer of the diacylglyceryl group from phosphatidylglycerol to the sulfhydryl group of the N-terminal cysteine of a prolipoprotein, the first step in the formation of mature lipoproteins. This Prochlorococcus marinus (strain MIT 9215) protein is Phosphatidylglycerol--prolipoprotein diacylglyceryl transferase.